Reading from the N-terminus, the 142-residue chain is Serine protease inhibitor (142 aa).

At Ser1 the chain carries N-acetylserine.

Functionally, serine protease inhibitor. Active against beta-trypsin and alpha-chymotrypsin with dissociation constants of 0.35 nM and 40 nM respectively. Inhibits factor XIa, but not other enzymes involved in coagulation and fibrinolysis. Does not inhibit subtilisin, lysyl endopeptidase, arginyl endopeptidase or papain. This Lentinula edodes (Shiitake mushroom) protein is Serine protease inhibitor.